Here is a 353-residue protein sequence, read N- to C-terminus: RNA 3'-terminal phosphate cyclase (353 aa).

ATP is bound by residues Gln-103 and His-297–Gln-301. His-322 serves as the catalytic Tele-AMP-histidine intermediate.

It belongs to the RNA 3'-terminal cyclase family. Type 1 subfamily.

Its subcellular location is the cytoplasm. It catalyses the reaction a 3'-end 3'-phospho-ribonucleotide-RNA + ATP = a 3'-end 2',3'-cyclophospho-ribonucleotide-RNA + AMP + diphosphate. Functionally, catalyzes the conversion of 3'-phosphate to a 2',3'-cyclic phosphodiester at the end of RNA. The mechanism of action of the enzyme occurs in 3 steps: (A) adenylation of the enzyme by ATP; (B) transfer of adenylate to an RNA-N3'P to produce RNA-N3'PP5'A; (C) and attack of the adjacent 2'-hydroxyl on the 3'-phosphorus in the diester linkage to produce the cyclic end product. The biological role of this enzyme is unknown but it is likely to function in some aspects of cellular RNA processing. This chain is RNA 3'-terminal phosphate cyclase, found in Salmonella heidelberg (strain SL476).